The primary structure comprises 414 residues: Na(+)-translocating NADH-quinone reductase subunit B (414 aa).

4 consecutive transmembrane segments (helical) span residues 23–40, 56–76, 129–149, and 164–184; these read WFALYEAVATVFYTPGLV, IMIMVWFAVFPAMFWGMYNAG, FLPIYATVFLVGGFWEVLFCM, and ILFALIVPPTLPLWQAALGIT. At threonine 236 the chain carries FMN phosphoryl threonine. Transmembrane regions (helical) follow at residues 268 to 288, 297 to 317, 325 to 345, 358 to 378, and 381 to 401; these read IPGSIGEVSTLALMIGAAMIV, IIAGVMIGMIAVSTLFNVVGS, MPWHWHLVLGGFAFGMFFMAT, WWYGILIGAMCVMIRVVNPAY, and GMMLAILFANLFAPLFDHVVI.

Belongs to the NqrB/RnfD family. As to quaternary structure, composed of six subunits; NqrA, NqrB, NqrC, NqrD, NqrE and NqrF. FMN serves as cofactor.

The protein localises to the cell inner membrane. The enzyme catalyses a ubiquinone + n Na(+)(in) + NADH + H(+) = a ubiquinol + n Na(+)(out) + NAD(+). In terms of biological role, NQR complex catalyzes the reduction of ubiquinone-1 to ubiquinol by two successive reactions, coupled with the transport of Na(+) ions from the cytoplasm to the periplasm. NqrA to NqrE are probably involved in the second step, the conversion of ubisemiquinone to ubiquinol. This is Na(+)-translocating NADH-quinone reductase subunit B from Vibrio parahaemolyticus serotype O3:K6 (strain RIMD 2210633).